The primary structure comprises 266 residues: Undecaprenyl-diphosphatase 3 (266 aa).

A run of 8 helical transmembrane segments spans residues 4 to 24 (IEAF…FLPI), 43 to 63 (SGRA…CWLY), 86 to 106 (FSVL…VDFI), 109 to 129 (VLFS…IIFW), 145 to 165 (ITFK…IPGT), 186 to 206 (TEFS…YDLL), 219 to 239 (NIGL…KALV), and 246 to 266 (TLRV…FVML).

The protein belongs to the UppP family.

It localises to the cell inner membrane. It catalyses the reaction di-trans,octa-cis-undecaprenyl diphosphate + H2O = di-trans,octa-cis-undecaprenyl phosphate + phosphate + H(+). Catalyzes the dephosphorylation of undecaprenyl diphosphate (UPP). Confers resistance to bacitracin. The sequence is that of Undecaprenyl-diphosphatase 3 from Acinetobacter baylyi (strain ATCC 33305 / BD413 / ADP1).